A 188-amino-acid chain; its full sequence is uncharacterized protein (188 aa).

The protein resides in the plastid. The protein localises to the cyanelle. This is an uncharacterized protein from Cyanophora paradoxa.